An 858-amino-acid polypeptide reads, in one-letter code: Bifunctional uridylyltransferase/uridylyl-removing enzyme (858 aa).

The segment at 1 to 324 (MSAHAAPSPE…PATSGITRVL (324 aa)) is uridylyltransferase. The uridylyl-removing stretch occupies residues 325 to 681 (SADRFVEKQG…ARPSPIGDAL (357 aa)). Residues 443–565 (VDQHILMVLR…VGNERYLTAL (123 aa)) form the HD domain. 2 ACT domains span residues 682–763 (QVLV…PSKG) and 790–858 (ILSV…AIAV).

It belongs to the GlnD family. It depends on Mg(2+) as a cofactor.

It catalyses the reaction [protein-PII]-L-tyrosine + UTP = [protein-PII]-uridylyl-L-tyrosine + diphosphate. The enzyme catalyses [protein-PII]-uridylyl-L-tyrosine + H2O = [protein-PII]-L-tyrosine + UMP + H(+). With respect to regulation, uridylyltransferase (UTase) activity is inhibited by glutamine, while glutamine activates uridylyl-removing (UR) activity. Modifies, by uridylylation and deuridylylation, the PII regulatory proteins (GlnB and homologs), in response to the nitrogen status of the cell that GlnD senses through the glutamine level. Under low glutamine levels, catalyzes the conversion of the PII proteins and UTP to PII-UMP and PPi, while under higher glutamine levels, GlnD hydrolyzes PII-UMP to PII and UMP (deuridylylation). Thus, controls uridylylation state and activity of the PII proteins, and plays an important role in the regulation of nitrogen assimilation and metabolism. This chain is Bifunctional uridylyltransferase/uridylyl-removing enzyme, found in Burkholderia orbicola (strain AU 1054).